We begin with the raw amino-acid sequence, 172 residues long: Ly6/PLAUR domain-containing protein 6B (172 aa).

An N-terminal signal peptide occupies residues 1-25; the sequence is MLLLCHILAVTILQILIISENWVFA. One can recognise a UPAR/Ly6 domain in the interval 46-137; that stretch reads FKCFTCENAG…VELPTNHTNA (92 aa). Positions 46-140 are sufficient for inhibiting alpha-7 nAChR currents; that stretch reads FKCFTCENAG…PTNHTNAVFA (95 aa). Cystine bridges form between cysteine 48–cysteine 76, cysteine 51–cysteine 60, cysteine 69–cysteine 95, cysteine 101–cysteine 120, cysteine 106–cysteine 117, and cysteine 121–cysteine 126. Serine 148 carries the GPI-anchor amidated serine lipid modification. The propeptide at 149–172 is removed in mature form; that stretch reads GSSVSSVPSPYLLVLAWLFMLPLL.

It is found in the cell membrane. In terms of biological role, likely acts as a modulator of nicotinic acetylcholine receptors (nAChRs) activity. In vitro acts on nAChRs in a subtype- and stoichiometry-dependent manner. Modulates specifically alpha-3(3):beta-4(2) nAChRs by enhancing the sensitivity to ACh, decreasing ACh-induced maximal current response and increasing the rate of desensitization to ACh; has no effect on alpha-7 homomeric nAChRs; modulates alpha-3(2):alpha-5:beta-4(2) nAChRs in the context of CHRNA5/alpha-5 variant Asn-398 but not its wild-type sequence. However, according to another report in vitro it can weakly inhibits alpha-7 nAChRs. The polypeptide is Ly6/PLAUR domain-containing protein 6B (Lypd6b) (Mus musculus (Mouse)).